Here is a 768-residue protein sequence, read N- to C-terminus: Mitochondrial 15S rRNA processing factor CCM1 (768 aa).

The N-terminal 90 residues, 1–90 (MIRLIRWNNV…RSFTKVIAQH (90 aa)), are a transit peptide targeting the mitochondrion. Disordered regions lie at residues 28-65 (NKRKRRIPPSKPRSSNRKDGDIEPYRMTDQNQTPNTGS) and 90-114 (HLKPEQENDSLTSAEKPDTSQLPPI). The segment covering 43–53 (NRKDGDIEPYR) has biased composition (basic and acidic residues). The segment covering 55–65 (TDQNQTPNTGS) has biased composition (polar residues). PPR repeat units lie at residues 274 to 308 (KIDHYETMILAYVKNNHMEKIDGILAQMKKKNIEI), 309 to 344 (SKMIYTSIVRGYIFYQKDHQRALDTFDSMKFLSQKT), 347 to 381 (DEKVYTDVIVSCVMHREIERALDLYYELKDKGMNV), 382 to 417 (NQNLLSTLAKGCSRSKQFKTQAWNFLFQVYDHGWVP), and 418 to 452 (NLQTYEHMLYIAARDGDVELTRVLFYKMLQTNSVT). Basic and acidic residues predominate over residues 583-596 (IEPRQDEPTEKATT). A disordered region spans residues 583-609 (IEPRQDEPTEKATTTEEQNASSETDNN). Positions 597 to 609 (TEEQNASSETDNN) are enriched in polar residues. Residues 634–664 (DSYLYNLAIKAAGKFKNYGFAQEILHERGQF) form a PPR 6 repeat.

Belongs to the CCM1 family. In terms of assembly, binds to mitochondrial small subunit 15S rRNA.

Its subcellular location is the mitochondrion. In terms of biological role, regulates mitochondrial small subunit maturation by controlling 15S rRNA 5'-end processing. Localizes to the 5' precursor of the 15S rRNA in a position that is subsequently occupied by mS47 in the mature yeast mtSSU. Uses structure and sequence-specific RNA recognition, binding to a single-stranded region of the precursor and specifically recognizing bases -6 to -1. The exchange of Ccm1 for mS47 is coupled to the irreversible removal of precursor rRNA that is accompanied by conformational changes of the mitoribosomal proteins uS5m and mS26. These conformational changes signal completion of 5'-end rRNA processing through protection of the mature 5'-end of the 15S rRNA and stabilization of mS47. The removal of the 5' precursor together with the dissociation of Ccm1 may be catalyzed by the 5'-3' exoribonuclease Pet127. Involved in the specific removal of group I introns in mitochondrial encoded transcripts. In Candida albicans (strain SC5314 / ATCC MYA-2876) (Yeast), this protein is Mitochondrial 15S rRNA processing factor CCM1 (CCM1).